We begin with the raw amino-acid sequence, 858 residues long: Ubiquitin carboxyl-terminal hydrolase 5 (858 aa).

At A2 the chain carries N-acetylalanine. The tract at residues 74–96 is disordered; that stretch reads RRTRRPKEEDPATGTGDPPRKKP. K113 is covalently cross-linked (Glycyl lysine isopeptide (Lys-Gly) (interchain with G-Cter in SUMO)). S149 and S156 each carry phosphoserine. The segment at 175–283 adopts a UBP-type; degenerate zinc-finger fold; the sequence is QVSKHAFSLK…EHLSHFGIDM (109 aa). C195 and C816 are disulfide-bonded. Zn(2+) is bound by residues C199 and C202. W209 lines the substrate pocket. C219 is a binding site for Zn(2+). 221-224 is a binding site for substrate; it reads RRYF. Residue H232 participates in Zn(2+) binding. Substrate is bound by residues Y259, Y261, and D264. A Phosphothreonine modification is found at T292. The 531-residue stretch at 326-856 folds into the USP domain; the sequence is TGIRNLGNSC…LGYIYFYQRV (531 aa). The active-site Nucleophile is the C335. T623 carries the post-translational modification Phosphothreonine. 2 UBA domains span residues 654–695 and 722–762; these read MLDE…VMSH and PPPE…IFSH. Residues S779, S783, and S785 each carry the phosphoserine modification. H818 serves as the catalytic Proton acceptor.

This sequence belongs to the peptidase C19 family. Homodimer. Interacts with TRIML1. Post-translationally, ubiquitinated by SMURF1; leading to proteasomal degradation. In terms of processing, SUMOylated at Lys-113; SUMOylation affects the interaction with Cav3.2 channels.

The protein localises to the cytoplasm. Its subcellular location is the stress granule. The protein resides in the nucleus. It catalyses the reaction Thiol-dependent hydrolysis of ester, thioester, amide, peptide and isopeptide bonds formed by the C-terminal Gly of ubiquitin (a 76-residue protein attached to proteins as an intracellular targeting signal).. Deubiquitinating enzyme that participates in a wide range of cellular processes by specifically cleaving isopeptide bonds between ubiquitin and substrate proteins or ubiquitin itself. Affects thereby important cellular signaling pathways such as NF-kappa-B, Wnt/beta-catenin, and cytokine production by regulating ubiquitin-dependent protein degradation. Participates in the activation of the Wnt signaling pathway by promoting FOXM1 deubiquitination and stabilization that induces the recruitment of beta-catenin to Wnt target gene promoter. Regulates the assembly and disassembly of heat-induced stress granules by mediating the hydrolysis of unanchored ubiquitin chains. Promotes lipopolysaccharide-induced apoptosis and inflammatory response by stabilizing the TXNIP protein. Affects T-cell biology by stabilizing the inhibitory receptor on T-cells PDC1. Acts as a negative regulator of autophagy by regulating ULK1 at both protein and mRNA levels. Acts also as a negative regulator of type I interferon production by simultaneously removing both 'Lys-48'-linked unanchored and 'Lys-63'-linked anchored polyubiquitin chains on the transcription factor IRF3. Modulates the stability of DNA mismatch repair protein MLH1 and counteracts the effect of the ubiquitin ligase UBR4. Upon activation by insulin, it gets phosphorylated through mTORC1-mediated phosphorylation to enhance YTHDF1 stability by removing 'Lys-11'-linked polyubiquitination. May also deubiquitinate other substrates such as the calcium channel CACNA1H. The polypeptide is Ubiquitin carboxyl-terminal hydrolase 5 (USP5) (Homo sapiens (Human)).